The sequence spans 213 residues: MVNYPNGRSQSYSAVPKKQKTLTELSVAKKSAPKSKSLVAFGKRGMNFEAEINATNDYYLSRGLAVIHKKPTPIQIVKVDYPQRSRAKITEAYFRQASTTDYSGVYKGHYVDFEAKETHQKTVFPLKNFHEHQIVHMSNVLAQRGIAFVLLHFADLEETYLLPSSYLITFYYEKNGLKSIPLAYIRENGYKIETNHIPRIPYLEIVNKLCEVQ.

Positions 99, 101, 114, and 133 each coordinate Mg(2+).

It belongs to the RecU family. Mg(2+) is required as a cofactor.

It is found in the cytoplasm. The catalysed reaction is Endonucleolytic cleavage at a junction such as a reciprocal single-stranded crossover between two homologous DNA duplexes (Holliday junction).. Its function is as follows. Endonuclease that resolves Holliday junction intermediates in genetic recombination. Cleaves mobile four-strand junctions by introducing symmetrical nicks in paired strands. Promotes annealing of linear ssDNA with homologous dsDNA. Required for DNA repair, homologous recombination and chromosome segregation. In Lactococcus lactis subsp. cremoris (strain SK11), this protein is Holliday junction resolvase RecU.